We begin with the raw amino-acid sequence, 1148 residues long: Autophagy-related protein 11 (1148 aa).

Residues 567-570 (FDDI) carry the AIM (Atg8-family-interacting motif) motif. A compositionally biased stretch (basic and acidic residues) spans 699–710 (KAEASSDVEGNK). 3 disordered regions span residues 699 to 727 (KAEA…CVSN), 754 to 777 (PLDS…EAGE), and 784 to 803 (NSST…ATGR). Composition is skewed to polar residues over residues 754–767 (PLDS…QNNE) and 784–793 (NSSTAESPQK). Coiled-coil stretches lie at residues 816 to 868 (ELRN…HLEN) and 956 to 996 (DKVS…VKTL). Thr-851 carries the phosphothreonine modification. The AIM (Atg8-family-interacting motif) motif lies at 1130–1133 (YFIV).

This sequence belongs to the ATG11 family. In terms of assembly, homodimer. Interacts with ATG8E, ATG13A and ATG101. Binds to ATG8E on autophagic vesicles.

Its subcellular location is the cytoplasmic vesicle. It localises to the autophagosome. Functionally, accessory protein involved in autophagy. Acts as a scaffold protein of the ATG1-ATG13 complex for faithful delivery of autophagic vesicles to the vacuole. Involved in the stress-induced phosphorylation of ATG1A for turnover of ATG1-ATG13 complex and proper ATG1-ATG13 complex assembly or activity. Required for selective mitophagy. Required for senescence-induced breakdown of mitochondria-resident proteins and mitochondrial vesicles. Seems not essential for ATG8-mediated autophagy. The polypeptide is Autophagy-related protein 11 (Arabidopsis thaliana (Mouse-ear cress)).